The chain runs to 88 residues: Alpha-conotoxin GVIIIB (88 aa).

An N-terminal signal peptide occupies residues 1–20; that stretch reads MMSKMGAMFVLLLLFTLASS. Positions 21 to 43 are excised as a propeptide; sequence QQEGDVQARKTRPKSDFYRALPR. Thr-87 carries the threonine amide modification.

It belongs to the conotoxin S superfamily. Post-translationally, contains 5 disulfide bonds. The predominant peptide contains 2 hydroxyprolines, while 2 minor peptides contains 1 and 3 hydroxyprolines. As to expression, expressed by the venom duct.

It localises to the secreted. Alpha-conotoxins act on postsynaptic membranes, they bind to the nicotinic acetylcholine receptors (nAChR) and thus inhibit them. This toxin shows high activity on alpha-9-alpha-10 (CHRNA9-CHRNA10) (IC(50)=9.79 nM). It also shows weak activity on alpha-3-beta-2 (CHRNA3-CHRNB2) (IC(50)~1 uM), alpha-6/alpha-3-beta-2-beta-3 (CHRNA6/CHRNA3-CHRNB2-CHRNB3) (IC(50)~1 uM). The toxin binds to the same or overlapping binding sites than conotoxin RgIA (AC P0C1D0). The sequence is that of Alpha-conotoxin GVIIIB from Conus geographus (Geography cone).